We begin with the raw amino-acid sequence, 467 residues long: Glutamate--tRNA ligase (467 aa).

Residues 15 to 25 carry the 'HIGH' region motif; that stretch reads PSPTGYLHVGG. The short motif at 249–253 is the 'KMSKS' region element; the sequence is KLSKR. Lys-252 is an ATP binding site.

Belongs to the class-I aminoacyl-tRNA synthetase family. Glutamate--tRNA ligase type 1 subfamily. Monomer.

The protein localises to the cytoplasm. The catalysed reaction is tRNA(Glu) + L-glutamate + ATP = L-glutamyl-tRNA(Glu) + AMP + diphosphate. Its function is as follows. Catalyzes the attachment of glutamate to tRNA(Glu) in a two-step reaction: glutamate is first activated by ATP to form Glu-AMP and then transferred to the acceptor end of tRNA(Glu). In Coprothermobacter proteolyticus (strain ATCC 35245 / DSM 5265 / OCM 4 / BT), this protein is Glutamate--tRNA ligase.